We begin with the raw amino-acid sequence, 84 residues long: MHGTCLSGLYPVPFTHNSHDYPHFNIYISFGGPKYCITALNTYVTPLLHRILTTQFIYTYANITKKSPLKSPKHKNILFFNHNT.

It belongs to the UPF0320 family.

The protein is Putative UPF0320 protein YNL337W of Saccharomyces cerevisiae (strain ATCC 204508 / S288c) (Baker's yeast).